The primary structure comprises 222 residues: Superoxide dismutase [Mn], mitochondrial (222 aa).

The N-terminal 24 residues, 1 to 24 (MLCRAACSTGRRLGPVAGAAGSRH), are a transit peptide targeting the mitochondrion. A Mn(2+)-binding site is contributed by His-50. A 3'-nitrotyrosine modification is found at Tyr-58. N6-acetyllysine; alternate occurs at positions 68 and 75. Lys-68 and Lys-75 each carry N6-succinyllysine; alternate. Position 98 (His-98) interacts with Mn(2+). Lys-114 carries the N6-acetyllysine modification. Residues Lys-122 and Lys-130 each carry the N6-acetyllysine; alternate modification. Lys-122 and Lys-130 each carry N6-succinyllysine; alternate. Asp-183 and His-187 together coordinate Mn(2+). Residue Lys-202 is modified to N6-acetyllysine.

The protein belongs to the iron/manganese superoxide dismutase family. In terms of assembly, homotetramer. It depends on Mn(2+) as a cofactor. Nitrated under oxidative stress. Nitration coupled with oxidation inhibits the catalytic activity. Post-translationally, acetylation at Lys-122 decreases enzymatic activity. Deacetylated by SIRT3 upon exposure to ionizing radiations or after long fasting. In terms of processing, polyubiquitinated; leading to proteasomal degradation. Deubiquitinated by USP36 which increases protein stability.

The protein localises to the mitochondrion matrix. It catalyses the reaction 2 superoxide + 2 H(+) = H2O2 + O2. Its function is as follows. Destroys superoxide anion radicals which are normally produced within the cells and which are toxic to biological systems. This chain is Superoxide dismutase [Mn], mitochondrial (Sod2), found in Mus musculus (Mouse).